We begin with the raw amino-acid sequence, 100 residues long: Proline-rich protein 15-like protein (100 aa).

A disordered region spans residues 26-100 (PDTYTQSEGG…LFDDREGKGQ (75 aa)). A compositionally biased stretch (basic and acidic residues) spans 53–62 (RLEKIVDKNT).

It belongs to the PRR15 family.

In Bos taurus (Bovine), this protein is Proline-rich protein 15-like protein (PRR15L).